The chain runs to 1233 residues: Structural maintenance of chromosomes protein 1A (1233 aa).

Residue 32–39 coordinates ATP; sequence GPNGSGKS. 2 coiled-coil regions span residues 104–124 and 163–503; these read EYKI…LEKL and ELAQ…KAEI. The segment covering 284–293 has biased composition (basic and acidic residues); it reads IKEKDSELNQ. Disordered stretches follow at residues 284 to 307 and 350 to 369; these read IKEK…NTSH and FEER…TLEE. S358 and S360 each carry phosphoserine. In terms of domain architecture, SMC hinge spans 515–629; sequence VYGRLIDLCQ…DNVEDARRIA (115 aa). N6-acetyllysine occurs at positions 648 and 713. A coiled-coil region spans residues 660 to 935; that stretch reads KAKARRWDEK…RHNLLQACKM (276 aa). Residues 946–969 are disordered; sequence TMDDISQEEGGSQGEESVSGSQRT. The segment covering 953–967 has biased composition (low complexity); the sequence is EEGGSQGEESVSGSQ. Phosphoserine occurs at positions 957, 962, 966, and 970. Residues 991–1068 are a coiled coil; sequence KDAQAEEEIK…FEQIKKERFD (78 aa). N6-acetyllysine is present on K1037.

The protein belongs to the SMC family. SMC1 subfamily. Forms a heterodimer with SMC3 in cohesin complexes. Cohesin complexes are composed of the SMC1 (SMC1A or meiosis-specific SMC1B) and SMC3 heterodimer attached via their SMC hinge domain, RAD21 which link them, and one STAG protein (STAG1, STAG2 or meiosis-specific STAG3), which interacts with RAD21. In germ cell cohesin complexes, SMC1A is mutually exclusive with SMC1B. Found in a complex with CDCA5, SMC3 and RAD21, PDS5A/SCC-112 and PDS5B/APRIN. Interacts with STAG3, NDC80, BRAC1, BRAT1 and RPGR. Found in a complex containing POLE and SMC3. The cohesin complex interacts with the cohesin loading complex subunits NIPBL/Scc2 (via HEAT repeats) and MAU2/Scc4. NIPBL directly contacts all members of the complex, RAD21, SMC1A/B, SMC3 and STAG1. Interacts with SYCP2. Phosphorylated upon ionizing radiation or DNA methylation. Phosphorylation of Ser-957 and Ser-966 activates it and is required for S-phase checkpoint activation. In terms of processing, ubiquitinated by the DCX(DCAF15) complex, leading to its degradation.

It is found in the nucleus. Its subcellular location is the chromosome. Functionally, involved in chromosome cohesion during cell cycle and in DNA repair. Central component of cohesin complex. The cohesin complex is required for the cohesion of sister chromatids after DNA replication. The cohesin complex apparently forms a large proteinaceous ring within which sister chromatids can be trapped. At anaphase, the complex is cleaved and dissociates from chromatin, allowing sister chromatids to segregate. The cohesin complex may also play a role in spindle pole assembly during mitosis. Involved in DNA repair via its interaction with BRCA1 and its related phosphorylation by ATM, or via its phosphorylation by ATR. Works as a downstream effector both in the ATM/NBS1 branch and in the ATR/MSH2 branch of S-phase checkpoint. In Rattus norvegicus (Rat), this protein is Structural maintenance of chromosomes protein 1A (Smc1a).